A 283-amino-acid polypeptide reads, in one-letter code: Protoheme IX farnesyltransferase 1 (283 aa).

9 helical membrane-spanning segments follow: residues 14–34 (IALMIALTAITGYGAVATKVD), 35–55 (PVALLLLTLAMILGSAASAVF), 84–104 (LGFALAVVLMVAGMALANAAF), 107–127 (VVALHLFLGGFVYVAIYTVWL), 133–153 (TNIIIGGAAGSFAVLAGAAAV), 163–183 (VLALVLFLWTPSHFWSLAILL), 208–228 (ILANTVILVGASLLPWGLGLL), 231–251 (VYGFVAAVSGAVLLGFNVVLV), and 258–278 (WAGWNFAASMPYLLLLFIAVF).

This sequence belongs to the UbiA prenyltransferase family. Protoheme IX farnesyltransferase subfamily.

Its subcellular location is the cell inner membrane. The catalysed reaction is heme b + (2E,6E)-farnesyl diphosphate + H2O = Fe(II)-heme o + diphosphate. The protein operates within porphyrin-containing compound metabolism; heme O biosynthesis; heme O from protoheme: step 1/1. Its function is as follows. Converts heme B (protoheme IX) to heme O by substitution of the vinyl group on carbon 2 of heme B porphyrin ring with a hydroxyethyl farnesyl side group. The chain is Protoheme IX farnesyltransferase 1 from Paramagnetospirillum magneticum (strain ATCC 700264 / AMB-1) (Magnetospirillum magneticum).